The chain runs to 32 residues: Cytochrome b6-f complex subunit 7 (32 aa).

Residues 9-27 (AAVFWVLIPVGLLGGAILL) traverse the membrane as a helical segment.

It belongs to the PetM family. As to quaternary structure, the 4 large subunits of the cytochrome b6-f complex are cytochrome b6, subunit IV (17 kDa polypeptide, PetD), cytochrome f and the Rieske protein, while the 4 small subunits are PetG, PetL, PetM and PetN. The complex functions as a dimer.

The protein localises to the cellular thylakoid membrane. Functionally, component of the cytochrome b6-f complex, which mediates electron transfer between photosystem II (PSII) and photosystem I (PSI), cyclic electron flow around PSI, and state transitions. The protein is Cytochrome b6-f complex subunit 7 of Prochlorococcus marinus (strain MIT 9211).